We begin with the raw amino-acid sequence, 422 residues long: UPF0761 membrane protein Paes_1471 (422 aa).

6 helical membrane passes run leucine 47–phenylalanine 67, serine 103–isoleucine 123, phenylalanine 143–alanine 163, leucine 185–proline 205, lysine 208–serine 228, and glycine 247–leucine 267.

It belongs to the UPF0761 family.

Its subcellular location is the cell inner membrane. This is UPF0761 membrane protein Paes_1471 from Prosthecochloris aestuarii (strain DSM 271 / SK 413).